The primary structure comprises 387 residues: Proline-rich protein 5 (387 aa).

2 interaction with RICTOR regions span residues 10–96 and 189–219; these read MSSP…LTKG and HESRGVTEDYLRLETLIQKVVSPYLGTYGLY. The interval 13 to 34 is disordered; the sequence is PSLSDLGKREPGAAGTDERGTQ. Basic and acidic residues predominate over residues 18-33; it reads LGKREPGAAGTDERGT. Residue serine 253 is modified to Phosphoserine. Residues 262–387 are disordered; sequence NPVAEHEAEG…EAPGGRPSVV (126 aa). The span at 305-314 shows a compositional bias: polar residues; sequence SGTFRSSPTP. Serine 373 carries the phosphoserine modification.

This sequence belongs to the PROTOR family. As to quaternary structure, associated component of the mechanistic target of rapamycin complex 2 (mTORC2). Binds directly to MTOR and RICTOR within the TORC2 complex. As to expression, ubiquitously expressed. Expressed at high levels in kidney.

In terms of biological role, associated subunit of mTORC2, which regulates cell growth and survival in response to hormonal signals. mTORC2 is activated by growth factors, but, in contrast to mTORC1, seems to be nutrient-insensitive. mTORC2 seems to function upstream of Rho GTPases to regulate the actin cytoskeleton, probably by activating one or more Rho-type guanine nucleotide exchange factors. PRR5 plays an important role in regulation of PDGFRB expression and in modulation of platelet-derived growth factor signaling. May act as a tumor suppressor in breast cancer. This is Proline-rich protein 5 from Mus musculus (Mouse).